The following is a 506-amino-acid chain: Maturase K (506 aa).

It belongs to the intron maturase 2 family. MatK subfamily.

It localises to the plastid. The protein localises to the chloroplast. Its function is as follows. Usually encoded in the trnK tRNA gene intron. Probably assists in splicing its own and other chloroplast group II introns. The protein is Maturase K of Rhododendron tsusiophyllum (Rhododendron).